Consider the following 98-residue polypeptide: Cell division topological specificity factor (98 aa).

This sequence belongs to the MinE family.

Its function is as follows. Prevents the cell division inhibition by proteins MinC and MinD at internal division sites while permitting inhibition at polar sites. This ensures cell division at the proper site by restricting the formation of a division septum at the midpoint of the long axis of the cell. The sequence is that of Cell division topological specificity factor from Nitrosomonas eutropha (strain DSM 101675 / C91 / Nm57).